The primary structure comprises 370 residues: uncharacterized protein (370 aa).

Residues 1–27 form the signal peptide; sequence MSSAANEGCVYLFIVVLRLSSFSCVNS. N-linked (GlcNAc...) asparagine glycans are attached at residues N59, N98, and N126. Disordered regions lie at residues 81–101 and 123–167; these read SRSH…NTTA and LSEN…CHQP. The segment covering 139-148 has biased composition (acidic residues); it reads HDDDDDDDLE. N-linked (GlcNAc...) asparagine glycosylation is found at N171, N221, N230, and N262.

This is an uncharacterized protein from Saccharomyces cerevisiae (strain ATCC 204508 / S288c) (Baker's yeast).